The chain runs to 570 residues: Protein HEATR9 (570 aa).

The polypeptide is Protein HEATR9 (HEATR9) (Macaca fascicularis (Crab-eating macaque)).